Consider the following 407-residue polypeptide: 12S rRNA N(4)-cytidine methyltransferase METTL15 (407 aa).

Residues 100-102 (GGH), D119, F146, D169, and Q176 contribute to the S-adenosyl-L-methionine site. The residue at position 358 (S358) is a Phosphoserine.

Belongs to the methyltransferase superfamily. RsmH family.

Its subcellular location is the mitochondrion matrix. The catalysed reaction is cytidine(839) in 12S rRNA + S-adenosyl-L-methionine = N(4)-methylcytidine(839) in 12S rRNA + S-adenosyl-L-homocysteine + H(+). Functionally, N4-methylcytidine (m4C) methyltransferase responsible for the methylation of position C839 in mitochondrial 12S rRNA. Involved in the stabilization of 12S rRNA folding, therefore facilitating the assembly of the mitochondrial small ribosomal subunits. The sequence is that of 12S rRNA N(4)-cytidine methyltransferase METTL15 (METTL15) from Pongo abelii (Sumatran orangutan).